We begin with the raw amino-acid sequence, 548 residues long: Thermosome subunit alpha (548 aa).

The segment at 527–548 (TKPEGGQGGGMPGGMGGMDMGM) is disordered. A compositionally biased stretch (gly residues) spans 531–548 (GGQGGGMPGGMGGMDMGM).

It belongs to the TCP-1 chaperonin family. As to quaternary structure, forms a Heterooligomeric complex of two stacked eight-membered rings.

Functionally, molecular chaperone; binds unfolded polypeptides in vitro, and has a weak ATPase activity. The sequence is that of Thermosome subunit alpha (thsA) from Thermococcus sp. (strain JCM 11816 / KS-1).